The sequence spans 83 residues: Toxin To12 (83 aa).

The signal sequence occupies residues 1–19; the sequence is MKGLILFICGFMMIGVILA. The LCN-type CS-alpha/beta domain maps to 20–82; sequence KEGYPMDHEG…VWDYYNNKCG (63 aa). 4 disulfide bridges follow: C30–C81, C34–C57, C42–C62, and C46–C64. At C81 the chain carries Cysteine amide.

It belongs to the long (4 C-C) scorpion toxin superfamily. Sodium channel inhibitor family. Beta subfamily. In terms of tissue distribution, expressed by the venom gland.

Its subcellular location is the secreted. Its function is as follows. Beta toxins bind voltage-independently at site-4 of sodium channels (Nav) and shift the voltage of activation toward more negative potentials thereby affecting sodium channel activation and promoting spontaneous and repetitive firing. The polypeptide is Toxin To12 (Tityus obscurus (Amazonian scorpion)).